The primary structure comprises 470 residues: Argininosuccinate lyase (470 aa).

It belongs to the lyase 1 family. Argininosuccinate lyase subfamily.

Its subcellular location is the cytoplasm. The enzyme catalyses 2-(N(omega)-L-arginino)succinate = fumarate + L-arginine. It functions in the pathway amino-acid biosynthesis; L-arginine biosynthesis; L-arginine from L-ornithine and carbamoyl phosphate: step 3/3. The protein is Argininosuccinate lyase of Mycobacterium tuberculosis (strain ATCC 25618 / H37Rv).